Reading from the N-terminus, the 128-residue chain is MKLRITLALTSVLAFCVFGDKENENLMENLLEDDLLDIFTDAIHMERQETNQECIAKWKSCAGRKLDCCEGLECWKRRWGHEVCVPITQKIFCLEKWKSCFERKYDCCEELECWERRGNKHPVCAPKQ.

An N-terminal signal peptide occupies residues 1 to 19 (MKLRITLALTSVLAFCVFG). Positions 20-47 (DKENENLMENLLEDDLLDIFTDAIHMER) are excised as a propeptide. 6 disulfides stabilise this stretch: Cys54/Cys69, Cys61/Cys74, Cys68/Cys84, Cys93/Cys108, Cys100/Cys113, and Cys107/Cys124. Domain repeat units follow at residues 54-84 (CIAK…HEVC) and 93-124 (CLEK…HPVC). The tract at residues 54–124 (CIAKWKSCAG…ERRGNKHPVC (71 aa)) is 2 X approximate repeats with cysteine pattern C-C-CC-C-C.

Belongs to the psalmotoxin-1 family. Double-knot toxin subfamily. In terms of tissue distribution, expressed by the venom gland.

It localises to the secreted. This toxin potently and selectively inhibits ASIC1a, an isoform of the gene ASIC1. It incompletely inhibits ASIC1a activation in a pH-independent and slowly reversible manner. This toxin acts by binding to and stabilizing the closed state of the channel, thereby impeding the transition into a conducting state. This toxin may bind to the acidic pocket of ASIC1a, since mutation of a key residue of this pocket (Arg-350) abolishes the ability of the toxin to inhibit ASIC1a. In vivo, this toxin protects the brain from neuronal injury when administered up to 8 hours after stroke onset. This Hadronyche infensa (Fraser island funnel-web spider) protein is Pi-hexatoxin-Hi1c.